We begin with the raw amino-acid sequence, 87 residues long: Developmentally-regulated ectodermal protein (87 aa).

A signal peptide spans methionine 1 to alanine 16.

In Tripneustes gratilla (Hawaian sea urchin), this protein is Developmentally-regulated ectodermal protein.